The primary structure comprises 899 residues: AP-3 complex subunit delta (899 aa).

HEAT repeat units follow at residues 37 to 74 (QSPEQLHEFLTRVLSECREEVKHADFNMKTNAVLKLTY), 155 to 192 (ELARDICEDLFLMLHSTKPYIRKKAVTALFKVFLQYPE), 194 to 229 (LRDNFEKFVDRLEDDDLSVVSATVSVICELSKHNPQ), 231 to 267 (FIQLSPILYQMLIKVDNNWVIIRLLKLFTNLAQIEPK), 268 to 305 (LRVKILPNVLELMDSTTAISVVYESINCIVKGNMLNSD), 308 to 344 (DSAVACLDKLHDFCTSNDPNLRYLSCVLFYKIGKINT), 345 to 382 (DFIANFDVLILRLLVDVDVSIRSKTLELLEGIVTEDNL), 384 to 428 (DFVQ…ITAM), 480 to 518 (RTLAQIVQLVKSEDITARLPGVLKECIWCLGEYSSLLDN), 536 to 580 (ELQQ…LIIS), 590 to 613 (SEALEFLRLCLDSLSEDASDSLPL), and 614 to 656 (LLTE…TESE). 4 disordered regions span residues 668 to 701 (DGIVSPDVSDTESDSEMYVPGAAPKDKGSSPTHE), 741 to 768 (NLSNSKPSSSGSLVRLSSESKAKEKKKK), 782 to 801 (GVNTADVTDDRPSNTPSARN), and 849 to 899 (AAEE…LTTE). The segment covering 743–759 (SNSKPSSSGSLVRLSSE) has biased composition (low complexity). The stretch at 841 to 862 (QRLLDESAAAEEEVVVVKKKKR) forms a coiled coil. Over residues 857-880 (VKKKKRSKDGSKSSKKKSRSKSKP) the composition is skewed to basic residues.

It belongs to the adaptor complexes large subunit family. In terms of assembly, adaptor protein complex 3 (AP-3) is a heterotetramer composed of 2 large adaptins (APL5 and APL6), a medium adaptin (APM3) and a small adaptin (APS3).

It localises to the golgi apparatus. The protein resides in the cytoplasmic vesicle. It is found in the clathrin-coated vesicle membrane. Part of the AP-3 complex, an adaptor-related complex which is not clathrin-associated. The complex is associated with the Golgi region as well as more peripheral structures. It facilitates the budding of vesicles from the Golgi membrane and may be directly involved in trafficking to the vacuole. In Eremothecium gossypii (strain ATCC 10895 / CBS 109.51 / FGSC 9923 / NRRL Y-1056) (Yeast), this protein is AP-3 complex subunit delta (APL5).